Consider the following 504-residue polypeptide: Melianol synthase CYP71BQ5 (504 aa).

The chain crosses the membrane as a helical span at residues 2–22 (EFRLPSLPVFLSFLLFFLMLV). C442 is a binding site for heme.

It belongs to the cytochrome P450 family. The cofactor is heme. In terms of tissue distribution, mainly expressed in fruits and leaves.

The protein resides in the membrane. It catalyses the reaction dihydroniloticin + 2 reduced [NADPH--hemoprotein reductase] + 2 O2 = melianol + 2 oxidized [NADPH--hemoprotein reductase] + 3 H2O + 2 H(+). The protein operates within secondary metabolite biosynthesis; terpenoid biosynthesis. Its function is as follows. Monooxygenase involved in the biosynthesis of limonoids triterpene natural products such as azadirachtin, an antifeedant widely used as bioinsecticide, and possessing many medicinal applications including anti-tumoral, anti-malarial, anti-rheumatic, antibacterial, anti-inflammatory, anti-pyretic and diuretic effects. Catalyzes the conversion of dihydroniloticin to the protolimonoid melianol. This Azadirachta indica (Neem tree) protein is Melianol synthase CYP71BQ5.